Consider the following 376-residue polypeptide: Phospho-N-acetylmuramoyl-pentapeptide-transferase (376 aa).

Helical transmembrane passes span Arg-28–Ile-48, Thr-76–Leu-96, Phe-100–Phe-120, Tyr-135–Ala-155, Tyr-179–Thr-199, Gly-211–Val-231, Ala-252–Tyr-272, Val-279–Phe-299, Ile-307–Phe-327, and Lys-353–Met-373.

It belongs to the glycosyltransferase 4 family. MraY subfamily. It depends on Mg(2+) as a cofactor.

It is found in the cell inner membrane. It catalyses the reaction UDP-N-acetyl-alpha-D-muramoyl-L-alanyl-gamma-D-glutamyl-meso-2,6-diaminopimeloyl-D-alanyl-D-alanine + di-trans,octa-cis-undecaprenyl phosphate = di-trans,octa-cis-undecaprenyl diphospho-N-acetyl-alpha-D-muramoyl-L-alanyl-D-glutamyl-meso-2,6-diaminopimeloyl-D-alanyl-D-alanine + UMP. The protein operates within cell wall biogenesis; peptidoglycan biosynthesis. In terms of biological role, catalyzes the initial step of the lipid cycle reactions in the biosynthesis of the cell wall peptidoglycan: transfers peptidoglycan precursor phospho-MurNAc-pentapeptide from UDP-MurNAc-pentapeptide onto the lipid carrier undecaprenyl phosphate, yielding undecaprenyl-pyrophosphoryl-MurNAc-pentapeptide, known as lipid I. This chain is Phospho-N-acetylmuramoyl-pentapeptide-transferase, found in Sorangium cellulosum (strain So ce56) (Polyangium cellulosum (strain So ce56)).